Consider the following 513-residue polypeptide: Dentin matrix acidic phosphoprotein 1 (513 aa).

The signal sequence occupies residues 1–16 (MKISILLMFLWGLSCA). The interval 23-513 (QNNESEDSEE…QDDNDCQDGY (491 aa)) is disordered. An N-linked (GlcNAc...) asparagine glycan is attached at Asn25. The span at 46–60 (ESSESSEGSKVSSEE) shows a compositional bias: low complexity. Residues 101–119 (DKDDDEDDSGDDTFGDDDS) show a composition bias toward acidic residues. Positions 143–162 (TIQASEESAPQGQDSAQDTT) are enriched in polar residues. Residues 163–180 (SESRELDNEDRVDSKPEG) are compositionally biased toward basic and acidic residues. A compositionally biased stretch (acidic residues) spans 208-220 (SELDDEGMQSDDP). Over residues 245-257 (NSEQANTQDSGGS) the composition is skewed to polar residues. The span at 275-287 (EEDDRSELDDNNT) shows a compositional bias: acidic residues. N-linked (GlcNAc...) asparagine glycosylation occurs at Asn285. Over residues 296–307 (TENSNSRDTGLS) the composition is skewed to polar residues. Positions 309–325 (PRRDSKGDSQEDSKENL) are enriched in basic and acidic residues. N-linked (GlcNAc...) asparagine glycans are attached at residues Asn324, Asn345, and Asn351. Over residues 337–354 (SSESSQEANLSSQENSSE) the composition is skewed to low complexity. The Cell attachment site signature appears at 364-366 (RGD). The segment covering 376–386 (EDQEDSDSSEE) has biased composition (acidic residues). Residues Asn413 and Asn426 are each glycosylated (N-linked (GlcNAc...) asparagine). Residues 417-426 (ESPESPEDEN) are compositionally biased toward acidic residues. A compositionally biased stretch (low complexity) spans 427–442 (SSSQEGLQSHSSSAES). The N-linked (GlcNAc...) asparagine glycan is linked to Asn467. The segment covering 484 to 502 (IEIESRKLTVDAYHNKPIG) has biased composition (basic and acidic residues). Residues 503–513 (DQDDNDCQDGY) show a composition bias toward acidic residues.

Interacts with importin alpha. In terms of processing, phosphorylated in the cytosol and extracellular matrix and unphosphorylated in the nucleus. Phosphorylation is necessary for nucleocytoplasmic transport and may be catalyzed by a nuclear isoform of CK2 and can be augmented by calcium. Phosphorylated (in vitro) by FAM20C in the extracellular medium at sites within the S-x-E/pS motif. In terms of tissue distribution, expressed in tooth particularly in odontoblast, ameloblast and cementoblast.

The protein localises to the nucleus. The protein resides in the cytoplasm. Its subcellular location is the secreted. It is found in the extracellular space. It localises to the extracellular matrix. In terms of biological role, may have a dual function during osteoblast differentiation. In the nucleus of undifferentiated osteoblasts, unphosphorylated form acts as a transcriptional component for activation of osteoblast-specific genes like osteocalcin. During the osteoblast to osteocyte transition phase it is phosphorylated and exported into the extracellular matrix, where it regulates nucleation of hydroxyapatite. The sequence is that of Dentin matrix acidic phosphoprotein 1 (DMP1) from Homo sapiens (Human).